The sequence spans 604 residues: Aspartate--tRNA(Asp/Asn) ligase (604 aa).

E168 contributes to the L-aspartate binding site. Residues 192–195 (QLFK) are aspartate. R214 is a binding site for L-aspartate. Residues 214 to 216 (RDE) and Q223 contribute to the ATP site. Residue H446 coordinates L-aspartate. An ATP-binding site is contributed by E480. Position 487 (R487) interacts with L-aspartate. ATP is bound at residue 532–535 (GWDR). Residues 575–604 (LEAGVDARPKPEARAQAGTAGPAAPVADPT) form a disordered region. Over residues 577–587 (AGVDARPKPEA) the composition is skewed to basic and acidic residues. The segment covering 588-604 (RAQAGTAGPAAPVADPT) has biased composition (low complexity).

Belongs to the class-II aminoacyl-tRNA synthetase family. Type 1 subfamily. As to quaternary structure, homodimer.

The protein localises to the cytoplasm. The enzyme catalyses tRNA(Asx) + L-aspartate + ATP = L-aspartyl-tRNA(Asx) + AMP + diphosphate. In terms of biological role, aspartyl-tRNA synthetase with relaxed tRNA specificity since it is able to aspartylate not only its cognate tRNA(Asp) but also tRNA(Asn). Reaction proceeds in two steps: L-aspartate is first activated by ATP to form Asp-AMP and then transferred to the acceptor end of tRNA(Asp/Asn). The polypeptide is Aspartate--tRNA(Asp/Asn) ligase (Salinispora arenicola (strain CNS-205)).